The sequence spans 498 residues: Signal recognition particle receptor FtsY (498 aa).

Disordered stretches follow at residues Met1 to Ser130 and Lys147 to Ser200. Positions Ala36–Glu46 are enriched in low complexity. Residues Ser103–Gln120 show a composition bias toward polar residues. Residues Gly301–Thr308, Asp383–Arg387, and Thr447–Asp450 contribute to the GTP site.

This sequence belongs to the GTP-binding SRP family. FtsY subfamily. In terms of assembly, part of the signal recognition particle protein translocation system, which is composed of SRP and FtsY.

It is found in the cell membrane. The protein localises to the cytoplasm. The enzyme catalyses GTP + H2O = GDP + phosphate + H(+). In terms of biological role, involved in targeting and insertion of nascent membrane proteins into the cytoplasmic membrane. Acts as a receptor for the complex formed by the signal recognition particle (SRP) and the ribosome-nascent chain (RNC). The polypeptide is Signal recognition particle receptor FtsY (Streptococcus mutans serotype c (strain ATCC 700610 / UA159)).